Here is a 201-residue protein sequence, read N- to C-terminus: Phosphoprotein (201 aa).

Disordered regions lie at residues 1–70 (MATR…EQLS) and 176–201 (PSHP…DIIP). 2 short sequence motifs (nuclear localization signal) span residues 29–36 (PRPRKVPR) and 181–193 (PPRI…SAPT).

In terms of assembly, homomultimer; only active in its oligomeric state. Interacts with nucleoprotein/N. Interacts with matrix/M protein. Interacts with host TBK1. Interacts with polymerase L. Interacts with host HMGB1; this interaction is required to stabilize RNP on chromosomes. Post-translationally, phosphorylated by host PKC epsilon and casein kinase II.

The protein localises to the host nucleus. Its subcellular location is the host cytoplasm. Functionally, essential component of the RNA polymerase transcription and replication complex. Acts as a scaffold which brings L in close proximity to the N-RNA complex. Plays a role in the segregation of the viral genome in host daughter cells during mitosis by interacting with host HMGB1, a host chromatin-remodeling DNA architectural protein, thereby stabilizing RNP on chromosomes. Interacts with host TBK1 and thus interferes with activation of cellular antiviral state. Inhibits cellular histone acetyltransferase activities. The chain is Phosphoprotein (P/X) from Bos taurus (Bovine).